A 336-amino-acid chain; its full sequence is Ketol-acid reductoisomerase (NADP(+)) (336 aa).

Positions 2-182 constitute a KARI N-terminal Rossmann domain; the sequence is AKIYYQQDCN…GGARAGVLET (181 aa). NADP(+) contacts are provided by residues 25-28, Ser51, Ser53, and 83-86; these read YGSQ and DEKQ. Residue His108 is part of the active site. Gly134 contributes to the NADP(+) binding site. One can recognise a KARI C-terminal knotted domain in the interval 183-328; that stretch reads TFREETETDL…AELRGLMSWT (146 aa). The Mg(2+) site is built by Asp191, Glu195, Glu227, and Glu231. Substrate is bound at residue Ser252.

This sequence belongs to the ketol-acid reductoisomerase family. Mg(2+) serves as cofactor.

The catalysed reaction is (2R)-2,3-dihydroxy-3-methylbutanoate + NADP(+) = (2S)-2-acetolactate + NADPH + H(+). It catalyses the reaction (2R,3R)-2,3-dihydroxy-3-methylpentanoate + NADP(+) = (S)-2-ethyl-2-hydroxy-3-oxobutanoate + NADPH + H(+). It participates in amino-acid biosynthesis; L-isoleucine biosynthesis; L-isoleucine from 2-oxobutanoate: step 2/4. The protein operates within amino-acid biosynthesis; L-valine biosynthesis; L-valine from pyruvate: step 2/4. Functionally, involved in the biosynthesis of branched-chain amino acids (BCAA). Catalyzes an alkyl-migration followed by a ketol-acid reduction of (S)-2-acetolactate (S2AL) to yield (R)-2,3-dihydroxy-isovalerate. In the isomerase reaction, S2AL is rearranged via a Mg-dependent methyl migration to produce 3-hydroxy-3-methyl-2-ketobutyrate (HMKB). In the reductase reaction, this 2-ketoacid undergoes a metal-dependent reduction by NADPH to yield (R)-2,3-dihydroxy-isovalerate. This chain is Ketol-acid reductoisomerase (NADP(+)), found in Lachnoclostridium phytofermentans (strain ATCC 700394 / DSM 18823 / ISDg) (Clostridium phytofermentans).